Reading from the N-terminus, the 345-residue chain is S-adenosylmethionine:tRNA ribosyltransferase-isomerase (345 aa).

This sequence belongs to the QueA family. Monomer.

The protein resides in the cytoplasm. The catalysed reaction is 7-aminomethyl-7-carbaguanosine(34) in tRNA + S-adenosyl-L-methionine = epoxyqueuosine(34) in tRNA + adenine + L-methionine + 2 H(+). The protein operates within tRNA modification; tRNA-queuosine biosynthesis. Its function is as follows. Transfers and isomerizes the ribose moiety from AdoMet to the 7-aminomethyl group of 7-deazaguanine (preQ1-tRNA) to give epoxyqueuosine (oQ-tRNA). This chain is S-adenosylmethionine:tRNA ribosyltransferase-isomerase, found in Finegoldia magna (strain ATCC 29328 / DSM 20472 / WAL 2508) (Peptostreptococcus magnus).